A 115-amino-acid polypeptide reads, in one-letter code: UPF0102 protein Kole_1919 (115 aa).

This sequence belongs to the UPF0102 family.

This is UPF0102 protein Kole_1919 from Kosmotoga olearia (strain ATCC BAA-1733 / DSM 21960 / TBF 19.5.1).